The sequence spans 325 residues: Diacylglycerol acyltransferase/mycolyltransferase Ag85B (325 aa).

The N-terminal stretch at methionine 1–alanine 40 is a signal peptide. Leucine 82–arginine 83 lines the substrate pocket. Residues phenylalanine 98–isoleucine 108 form a fibronectin-binding region. Cysteine 127 and cysteine 132 are oxidised to a cystine. Substrate contacts are provided by serine 166 and aspartate 194. Serine 166 acts as the Nucleophile in catalysis. The active site involves glutamate 270. Substrate contacts are provided by residues phenylalanine 272 to serine 275, lysine 279, and histidine 302 to tryptophan 304. Histidine 302 is an active-site residue.

It belongs to the mycobacterial A85 antigen family.

Its subcellular location is the secreted. The catalysed reaction is 2 alpha,alpha'-trehalose 6-mycolate = alpha,alpha'-trehalose 6,6'-bismycolate + alpha,alpha-trehalose. It catalyses the reaction an acyl-CoA + a 1,2-diacyl-sn-glycerol = a triacyl-sn-glycerol + CoA. The antigen 85 proteins (FbpA, FbpB, FbpC) are responsible for the high affinity of mycobacteria for fibronectin, a large adhesive glycoprotein, which facilitates the attachment of Mycobacteria to murine alveolar macrophages (AMs). They also help to maintain the integrity of the cell wall by catalyzing the transfer of mycolic acids to cell wall arabinogalactan and through the synthesis of alpha,alpha-trehalose dimycolate (TDM, cord factor). They catalyze the transfer of a mycoloyl residue from one molecule of alpha,alpha-trehalose monomycolate (TMM) to another TMM, leading to the formation of TDM. The chain is Diacylglycerol acyltransferase/mycolyltransferase Ag85B (fbpB) from Mycobacterium bovis (strain BCG / Pasteur 1173P2).